Here is a 149-residue protein sequence, read N- to C-terminus: Large ribosomal subunit protein uL13 (149 aa).

Belongs to the universal ribosomal protein uL13 family. As to quaternary structure, part of the 50S ribosomal subunit.

In terms of biological role, this protein is one of the early assembly proteins of the 50S ribosomal subunit, although it is not seen to bind rRNA by itself. It is important during the early stages of 50S assembly. The chain is Large ribosomal subunit protein uL13 from Chlorobium phaeobacteroides (strain DSM 266 / SMG 266 / 2430).